We begin with the raw amino-acid sequence, 431 residues long: Levansucrase LscC (431 aa).

Tryptophan 61, aspartate 62, alanine 148, arginine 218, and aspartate 219 together coordinate sucrose. Catalysis depends on aspartate 62, which acts as the Nucleophile. The active-site Proton donor/acceptor is glutamate 303.

It belongs to the glycosyl hydrolase 68 family.

It is found in the periplasm. The enzyme catalyses [6)-beta-D-fructofuranosyl-(2-&gt;](n) alpha-D-glucopyranoside + sucrose = [6)-beta-D-fructofuranosyl-(2-&gt;](n+1) alpha-D-glucopyranoside + D-glucose. Catalyzes the synthesis of levan, a fructose polymer, by transferring the fructosyl moiety from sucrose to a growing acceptor molecule. In Pseudomonas savastanoi pv. glycinea (Pseudomonas syringae pv. glycinea), this protein is Levansucrase LscC.